The primary structure comprises 265 residues: Apolipoprotein A-I (265 aa).

Residues 1–20 (METKAVVLTLAVLFLTGSQA) form the signal peptide. 2 repeat units span residues 69–90 (LKIL…EQMR) and 91–112 (PIFQ…EVLN). The 10 X approximate tandem repeats stretch occupies residues 69–265 (LKILDNWDTL…DEATKKLNSQ (197 aa)). The 3; half-length repeat unit spans residues 113–123 (KDLEELKQKVQ). Repeat copies occupy residues 124–145 (PYLD…QKMA), 146–167 (PLGT…EKLG), 168–189 (PLGE…TQLA), 190–209 (PYTE…LKES), and 210–230 (NLAE…ENAK). A Methionine sulfoxide modification is found at Met-195. A 9; half-length repeat occupies 231-241 (PALEDFRQGLM). Position 241 is a methionine sulfoxide (Met-241). Repeat 10 spans residues 242–265 (PVLEGFQKSVLAALDEATKKLNSQ).

It belongs to the apolipoprotein A1/A4/E family. Homodimer. Interacts with APOA1BP and CLU. Component of a sperm activating protein complex (SPAP), consisting of APOA1, an immunoglobulin heavy chain, an immunoglobulin light chain and albumin. Interacts with NDRG1. Interacts with SCGB3A2. Interacts with NAXE and YJEFN3. In terms of processing, glycosylated. Post-translationally, palmitoylated. Phosphorylation sites are present in the extracellular medium. As to expression, major protein of plasma HDL, also found in chylomicrons.

The protein resides in the secreted. Participates in the reverse transport of cholesterol from tissues to the liver for excretion by promoting cholesterol efflux from tissues and by acting as a cofactor for the lecithin cholesterol acyltransferase (LCAT). As part of the SPAP complex, activates spermatozoa motility. This is Apolipoprotein A-I (APOA1) from Orycteropus afer (Aardvark).